The sequence spans 194 residues: UPF0215 protein PF2042 (194 aa).

Belongs to the UPF0215 family.

The polypeptide is UPF0215 protein PF2042 (Pyrococcus furiosus (strain ATCC 43587 / DSM 3638 / JCM 8422 / Vc1)).